Consider the following 134-residue polypeptide: Thrombin inhibitor savignin (134 aa).

The signal sequence occupies residues 1–16 (MLFYVVITLVAGTVSG). A BPTI/Kunitz inhibitor 1 domain is found at 17–69 (LNVRCNNPHTANCENGAKLESYFREGETCVGSPACPGEGYATKEDCQKACFPG). Disulfide bonds link Cys21-Cys66, Cys29-Cys51, Cys45-Cys62, Cys81-Cys129, Cys89-Cys112, and Cys105-Cys125. The segment at 70 to 82 (GGDHSTNVDSSCF) is linker. A BPTI/Kunitz inhibitor domain is found at 83 to 129 (GQPPTSCETGAEVTYYDSGSRTCKVLQHGCPSSENAFDSEIECQVAC).

In terms of tissue distribution, expressed in salivary glands.

Its subcellular location is the cytoplasmic vesicle. It localises to the secretory vesicle. The protein resides in the secreted. Tick salivary thrombin inhibitor that plays an important part in the anti-hemostatic strategy of ticks. Inhibits thrombin-induced platelet aggregation, but has no effect on ADP- or collagen-induced aggregation. Is a competitive, slow-, tight-binding inhibitor of thrombin (Ki=4.89 pM). It requires thrombin fibrinogen-binding exosite for optimal inhibition, as its affinity for thrombin lacking the exosite is much lower (Ki=22.3 nM). Its N-terminal amino acid residues may bind inside the active site cleft of thrombin, while its C-terminal domain may interact with the basic fibrinogen recognition exosite of thrombin. It does not inhibit plasmin, factor Xa (F10), and trypsin. The sequence is that of Thrombin inhibitor savignin from Ornithodoros kalahariensis (Tick).